The sequence spans 433 residues: Serine hydroxymethyltransferase (433 aa).

(6S)-5,6,7,8-tetrahydrofolate contacts are provided by residues Leu-133 and 137–139 (GHL). Lys-242 is modified (N6-(pyridoxal phosphate)lysine). 366–368 (SPF) contacts (6S)-5,6,7,8-tetrahydrofolate.

The protein belongs to the SHMT family. In terms of assembly, homodimer. Pyridoxal 5'-phosphate is required as a cofactor.

It is found in the cytoplasm. It carries out the reaction (6R)-5,10-methylene-5,6,7,8-tetrahydrofolate + glycine + H2O = (6S)-5,6,7,8-tetrahydrofolate + L-serine. It functions in the pathway one-carbon metabolism; tetrahydrofolate interconversion. Its pathway is amino-acid biosynthesis; glycine biosynthesis; glycine from L-serine: step 1/1. Catalyzes the reversible interconversion of serine and glycine with tetrahydrofolate (THF) serving as the one-carbon carrier. This reaction serves as the major source of one-carbon groups required for the biosynthesis of purines, thymidylate, methionine, and other important biomolecules. Also exhibits THF-independent aldolase activity toward beta-hydroxyamino acids, producing glycine and aldehydes, via a retro-aldol mechanism. This Beijerinckia indica subsp. indica (strain ATCC 9039 / DSM 1715 / NCIMB 8712) protein is Serine hydroxymethyltransferase.